The chain runs to 147 residues: MSFLSAEEKNLVSGLWGKVNVDEVGGEALGRLLVVYPWTQRFFQSFGDLSSADAIMSNAKVKAHGKKVLNSFSDGLKNIDDLKGAFAKLSELHCDKLHVDPENFRLLGNVLVCVLAHHFGHEFNPQVQAAFQKVVAGVASALAHRYH.

Ser2 is modified (N-acetylserine). The Globin domain maps to 3 to 147; the sequence is FLSAEEKNLV…VASALAHRYH (145 aa). A Phosphoserine modification is found at Ser45. Residue Lys60 is modified to N6-acetyllysine. His64 is a heme b binding site. N6-acetyllysine is present on Lys83. Residue His93 participates in heme b binding. Cys94 bears the S-nitrosocysteine mark.

This sequence belongs to the globin family. Heterotetramer of two alpha chains and two beta chains. In terms of tissue distribution, red blood cells.

In terms of biological role, involved in oxygen transport from the lung to the various peripheral tissues. The sequence is that of Hemoglobin subunit beta (HBB) from Panthera pardus orientalis (Amur leopard).